Consider the following 602-residue polypeptide: General amino-acid permease GAP1 (602 aa).

The Cytoplasmic segment spans residues 1 to 95; sequence MSNTSSYEKN…LKHHLKNRHL (95 aa). Lysine 76 is covalently cross-linked (Glycyl lysine isopeptide (Lys-Gly) (interchain with G-Cter in ubiquitin)). A helical membrane pass occupies residues 96–116; the sequence is QMIAIGGAIGTGLLVGSGTAL. Residues 117-121 are Extracellular-facing; it reads RTGGP. The chain crosses the membrane as a helical span at residues 122–142; the sequence is ASLLIGWGSTGTMIYAMVMAL. Residues 143 to 165 lie on the Cytoplasmic side of the membrane; that stretch reads GELAVIFPISGGFTTYATRFIDE. A helical membrane pass occupies residues 166-185; it reads SFGYANNFNYMLQWLVVLPL. The Extracellular portion of the chain corresponds to 186 to 204; it reads EIVSASITVNFWGTDPKYR. Residues 205–224 traverse the membrane as a helical segment; it reads DGFVALFWLAIVIINMFGVK. Topologically, residues 225 to 237 are cytoplasmic; the sequence is GYGEAEFVFSFIK. A helical membrane pass occupies residues 238–256; that stretch reads VITVVGFIILGIILNCGGG. Residues 257–280 are Extracellular-facing; it reads PTGGYIGGKYWHDPGAFAGDTPGA. A helical transmembrane segment spans residues 281-298; the sequence is KFKGVCSVFVTAAFSFAG. Residues 299 to 321 lie on the Cytoplasmic side of the membrane; sequence SELVGLAASESVEPRKSVPKAAK. Residues 322-342 traverse the membrane as a helical segment; the sequence is QVFWRITLFYILSLLMIGLLV. The Extracellular segment spans residues 343-376; that stretch reads PYNDKSLIGASSVDAAASPFVIAIKTHGIKGLPS. A helical membrane pass occupies residues 377-396; it reads VVNVVILIAVLSVGNSAIYA. Topologically, residues 397 to 421 are cytoplasmic; it reads CSRTMVALAEQRFLPEIFSYVDRKG. A helical membrane pass occupies residues 422 to 442; it reads RPLVGIAVTSAFGLIAFVAAS. Residues 443-451 lie on the Extracellular side of the membrane; it reads KKEGEVFNW. The helical transmembrane segment at 452-472 threads the bilayer; it reads LLALSGLSSLFTWGGICICHI. Topologically, residues 473-491 are cytoplasmic; it reads RFRKALAAQGRGLDELSFK. Residues 492-510 traverse the membrane as a helical segment; the sequence is SPTGVWGSYWGLFMVIIMF. Topologically, residues 511–529 are extracellular; that stretch reads IAQFYVAVFPVGDSPSAEG. The chain crosses the membrane as a helical span at residues 530–548; that stretch reads FFEAYLSFPLVMVMYIGHK. The Cytoplasmic portion of the chain corresponds to 549–602; the sequence is IYKRNWKLFIPAEKMDIDTGRREVDLDLLKQEIAEEKAIMATKPRWYRIWNFWC.

This sequence belongs to the amino acid-polyamine-organocation (APC) superfamily. YAT (TC 2.A.3.10) family. Active permease is phosphorylated. The addition of glutamine causes rapid dephosphorylation and inactivation of the permease. In terms of processing, ubiquitination by RSP5 and the RSP5-associated proteins BUL1 and BUL2, leads the addition of poly-ubiquitin chains being specifically formed by linkage through the lysine 63 residue of ubiquitin and mediates ammonium-induced endocytosis and degradation in the vacuole.

It localises to the cell membrane. Its subcellular location is the endoplasmic reticulum membrane. Its function is as follows. General amino-acid permease involved in the uptake of all the naturally occurring L-amino-acids, related compounds such as ornithine and citrulline, some D-amino acids, toxic amino acid analogs such as azetidine-2-carboxylate, and the polyamines putrescine and spermidine. Senses its transport substrates to set an appropriate level of transporter activity at the cell surface. Required for FLO11 expression and invasive growth. The sequence is that of General amino-acid permease GAP1 from Saccharomyces cerevisiae (strain ATCC 204508 / S288c) (Baker's yeast).